A 167-amino-acid chain; its full sequence is Ubiquitin-fold modifier-conjugating enzyme 1 (167 aa).

Cys116 serves as the catalytic Glycyl thioester intermediate.

It belongs to the ubiquitin-conjugating enzyme family. UFC1 subfamily. As to quaternary structure, interacts with UBA5 (via C-terminus). Interacts with UFL1. Interacts with UFM1.

E2-like enzyme which specifically catalyzes the second step in ufmylation. Accepts the ubiquitin-like modifier UFM1 from the E1 enzyme UBA5 and forms an intermediate with UFM1 via a thioester linkage. Ufmylation is involved in various processes, such as ribosome recycling, response to DNA damage, interferon response or reticulophagy (also called ER-phagy). The polypeptide is Ubiquitin-fold modifier-conjugating enzyme 1 (Salmo salar (Atlantic salmon)).